The sequence spans 498 residues: Inosine-5'-monophosphate dehydrogenase (498 aa).

CBS domains follow at residues 98 to 155 (MVVN…EQKI) and 159 to 216 (MTRE…PHAS). NAD(+)-binding positions include D253 and 303-305 (GIG). 2 residues coordinate K(+): G305 and G307. An IMP-binding site is contributed by S308. C310 lines the K(+) pocket. C310 serves as the catalytic Thioimidate intermediate. IMP-binding positions include 343–345 (DGG), 366–367 (GS), and 390–394 (YRGMG). Residue R406 is the Proton acceptor of the active site. Residue E421 participates in IMP binding. Residues E475, S476, and H477 each coordinate K(+).

Belongs to the IMPDH/GMPR family. In terms of assembly, homotetramer. K(+) serves as cofactor.

The catalysed reaction is IMP + NAD(+) + H2O = XMP + NADH + H(+). Its pathway is purine metabolism; XMP biosynthesis via de novo pathway; XMP from IMP: step 1/1. With respect to regulation, mycophenolic acid (MPA) is a non-competitive inhibitor that prevents formation of the closed enzyme conformation by binding to the same site as the amobile flap. In contrast, mizoribine monophosphate (MZP) is a competitive inhibitor that induces the closed conformation. MPA is a potent inhibitor of mammalian IMPDHs but a poor inhibitor of the bacterial enzymes. MZP is a more potent inhibitor of bacterial IMPDH. Functionally, catalyzes the conversion of inosine 5'-phosphate (IMP) to xanthosine 5'-phosphate (XMP), the first committed and rate-limiting step in the de novo synthesis of guanine nucleotides, and therefore plays an important role in the regulation of cell growth. The protein is Inosine-5'-monophosphate dehydrogenase of Rhizobium tropici.